Consider the following 153-residue polypeptide: 6,7-dimethyl-8-ribityllumazine synthase (153 aa).

Residues Phe23, 57-59 (AYE), and 81-83 (AVI) each bind 5-amino-6-(D-ribitylamino)uracil. (2S)-2-hydroxy-3-oxobutyl phosphate is bound at residue 86 to 87 (AT). His89 serves as the catalytic Proton donor. Phe113 is a 5-amino-6-(D-ribitylamino)uracil binding site. Residue Arg127 participates in (2S)-2-hydroxy-3-oxobutyl phosphate binding.

The protein belongs to the DMRL synthase family.

The catalysed reaction is (2S)-2-hydroxy-3-oxobutyl phosphate + 5-amino-6-(D-ribitylamino)uracil = 6,7-dimethyl-8-(1-D-ribityl)lumazine + phosphate + 2 H2O + H(+). The protein operates within cofactor biosynthesis; riboflavin biosynthesis; riboflavin from 2-hydroxy-3-oxobutyl phosphate and 5-amino-6-(D-ribitylamino)uracil: step 1/2. Functionally, catalyzes the formation of 6,7-dimethyl-8-ribityllumazine by condensation of 5-amino-6-(D-ribitylamino)uracil with 3,4-dihydroxy-2-butanone 4-phosphate. This is the penultimate step in the biosynthesis of riboflavin. This is 6,7-dimethyl-8-ribityllumazine synthase from Leptospira borgpetersenii serovar Hardjo-bovis (strain JB197).